The primary structure comprises 787 residues: Transcriptional corepressor LEUNIG_HOMOLOG (787 aa).

Residues 1-88 (MAQSNWEADK…IEAQQGKAKE (88 aa)) are required for SEU-binding. The region spanning 8–40 (ADKMLDVYIYDYLVKKKLHNTAKSFMTEGKVSP) is the LisH domain. Positions 77–106 (AYIEAQQGKAKEQQMQIQQLQMMRQAQMQR) form a coiled coil. A disordered region spans residues 299–413 (NMTNSPMYGG…TPSTHTPVDG (115 aa)). Composition is skewed to low complexity over residues 336–346 (SIGSPMQSSSS) and 355–372 (QQSS…QSQQ). Over residues 380–409 (PSSSGPANSTGTGNTVGPSNSQPSTPSTHT) the composition is skewed to polar residues. WD repeat units lie at residues 508-547 (KSAS…VEST), 550-589 (EHAH…YFLR), 593-633 (GHAA…VRAV), 635-671 (GAST…KRVN), 675-715 (GHSS…HELS), 717-755 (SGNK…CMTV), and 757-787 (GHEC…KIWK).

Forms corepressor complexes with SLK1 and SLK2; LUH is the transcription repressor subunit and SLK1 and SLK2 the specific DNA-binding adapters. Interacts with SEU. Binds to YAB3, YAB5 and YAB1/FIL; these complexes promote adaxial cell identity in leaves as well as embryonic shoot apical meristem (SAM) initiation and postembryonic SAM maintenance. In terms of tissue distribution, expressed in roots, stems, leaves, seedlings, apex, flowers, siliques, flower organs and seeds (including seed coat).

The protein localises to the nucleus. Functionally, transcription repressor subunit of the SEU-SLK1 and SEU-SLK2 transcriptional corepressor of abiotic stress (e.g. salt and osmotic stress) response genes, by means of an epigenetic process involving histone modification (e.g. H3K9 and H3K14 acetylation), probably by recruiting HDAC, to facilitate the condensation of chromatin thus preventing transcription at the target genes. Can also act as a transcription activator. Implicated in embryo and floral development. Involved in post-synthesis cell wall modifications necessary for mucilage extrusion from seeds upon imbibition, probably by promoting the expression of genes required for mucilage maturation (e.g. MUM2). Regulates the maintenance on leaf polarity and meristem activity as well as the initiation of embryonic shoot apical meristem (SAM) development. This Arabidopsis thaliana (Mouse-ear cress) protein is Transcriptional corepressor LEUNIG_HOMOLOG.